The chain runs to 135 residues: Ribosome-binding factor A (135 aa).

The protein belongs to the RbfA family. As to quaternary structure, monomer. Binds 30S ribosomal subunits, but not 50S ribosomal subunits or 70S ribosomes.

Its subcellular location is the cytoplasm. One of several proteins that assist in the late maturation steps of the functional core of the 30S ribosomal subunit. Associates with free 30S ribosomal subunits (but not with 30S subunits that are part of 70S ribosomes or polysomes). Required for efficient processing of 16S rRNA. May interact with the 5'-terminal helix region of 16S rRNA. The sequence is that of Ribosome-binding factor A from Novosphingobium aromaticivorans (strain ATCC 700278 / DSM 12444 / CCUG 56034 / CIP 105152 / NBRC 16084 / F199).